The chain runs to 387 residues: Phosphoglycerate kinase (387 aa).

Residues 21–23 (DLN), arginine 36, 59–62 (HLGR), arginine 113, and arginine 146 each bind substrate. ATP-binding positions include lysine 197, glutamate 314, and 340-343 (GGDT).

It belongs to the phosphoglycerate kinase family. Monomer.

It localises to the cytoplasm. The catalysed reaction is (2R)-3-phosphoglycerate + ATP = (2R)-3-phospho-glyceroyl phosphate + ADP. It functions in the pathway carbohydrate degradation; glycolysis; pyruvate from D-glyceraldehyde 3-phosphate: step 2/5. The polypeptide is Phosphoglycerate kinase (Pseudomonas putida (strain GB-1)).